The sequence spans 368 residues: Trans-enoyl reductase thnE (368 aa).

NADP(+) is bound at residue 53–56 (VDVK). 140-147 (LATATAAY) contacts substrate. Residues 179–182 (STAT), 202–205 (SPSN), Tyr220, and 267–268 (VE) each bind NADP(+). Position 289–293 (289–293 (VMTVW)) interacts with substrate. NADP(+) is bound at residue 358-359 (PS).

Belongs to the zinc-containing alcohol dehydrogenase family. Monomer.

The catalysed reaction is malate + 6 malonyl-CoA + acetyl-CoA + 2 AH2 + 2 S-adenosyl-L-methionine + 5 NADPH + 9 H(+) = trihazone A + 2 A + 2 S-adenosyl-L-homocysteine + 6 CO2 + 5 NADP(+) + 7 CoA + 6 H2O. It participates in secondary metabolite biosynthesis. Functionally, trans-enoyl reductase; part of the gene cluster that produces the tetronate natural products trihazones. The PKS-NRPS synthetase thnA with the help of the trans-enoyl reductase thnE are responsible for the synthesis of the carboxylmethyl containing trihazone A. The PKS portion of thnA synthesizes beta-keto-triene chain from one acetyl-CoA and 6 equivalents of malonyl-CoA, in collaboration with thnE, which selectively reduces the enoyl intermediate during the first and fourth iteration of the PKS. The NRPS domain selects and activates malate, of which the alpha-hydroxyl group attacks the completed polyketide acyl-S-ACP chain to form the ester product. Intramolecular Dieckmann cyclization catalyzed by the terminal reductase domain releases the product as trihazone A from the PKS-NPRS. The pathway begins with the formation of trihazone A by the hybrid PKS-NRPS synthetase thnA and the trans-enoyl reductase thnE. Trihazone A is further decarboxylated by the 2-oxoglutarate-dependent dioxygenase thnC to produce trihazone D. The function of the FAD-dependent monooxygenase thnD has still to be identified. This Trichoderma harzianum (Hypocrea lixii) protein is Trans-enoyl reductase thnE.